Here is a 180-residue protein sequence, read N- to C-terminus: Inner membrane-spanning protein YciB (180 aa).

A run of 5 helical transmembrane segments spans residues 10–30 (IIAF…GVLM), 47–67 (ITTR…VTLL), 74–94 (IKMK…GGLI), 121–141 (YAWI…AEFW), and 151–171 (VFGI…YMYH).

The protein belongs to the YciB family.

The protein localises to the cell inner membrane. Plays a role in cell envelope biogenesis, maintenance of cell envelope integrity and membrane homeostasis. The protein is Inner membrane-spanning protein YciB of Idiomarina loihiensis (strain ATCC BAA-735 / DSM 15497 / L2-TR).